Consider the following 171-residue polypeptide: Ly6/PLAUR domain-containing protein 6 (171 aa).

The N-terminal stretch at 1–25 (MEPSPALAWLLLLSLVADCLKAAQS) is a signal peptide. The UPAR/Ly6 domain maps to 47–141 (FKCFTCEKAA…PRNDTDATFA (95 aa)). Disulfide bonds link Cys49–Cys77, Cys52–Cys61, Cys70–Cys96, Cys102–Cys121, Cys107–Cys118, and Cys122–Cys127. A NxI motif motif is present at residues 88-90 (NSI). N-linked (GlcNAc...) asparagine glycosylation is found at Asn134 and Asn147. Residue Asn147 is the site of GPI-anchor amidated asparagine attachment. Positions 148–171 (QTNGHPHCVSVIVSCLWVWLGLTL) are cleaved as a propeptide — removed in mature form.

As to quaternary structure, interacts with nicotinic acetylcholine receptors (nAChRs) including CHRNA3, CHRNA4, CHRNA5, CHRNA6, CHRNA7, CHRNB2 and CHRNB4. Interacts (via NxI motif) with LRP6. In terms of tissue distribution, expressed at high levels in the cortex and cerebellum of the brain, at moderate levels in the lung, kidney, and liver, and at low levels in the heart and prostate (at protein level). Expressed in neurons (at protein level).

It is found in the secreted. It localises to the cytoplasm. The protein localises to the cell membrane. The protein resides in the synapse. Its subcellular location is the synaptosome. It is found in the membrane raft. It localises to the cell projection. The protein localises to the dendrite. The protein resides in the perikaryon. Acts as a modulator of nicotinic acetylcholine receptors (nAChRs) function in the brain. Inhibits nicotine-induced Ca(2+) influx through nAChRs. In vitro, specifically inhibits alpha-3:beta-4 and alpha-7 nAChR currents in an allosteric manner. Acts as a positive regulator of Wnt/beta-catenin signaling. This Rattus norvegicus (Rat) protein is Ly6/PLAUR domain-containing protein 6 (Lypd6).